A 971-amino-acid polypeptide reads, in one-letter code: Kinesin-like protein KIN-14C (971 aa).

The region spanning 14–119 (ANRRAEVIDW…CLLALKDNVA (106 aa)) is the Calponin-homology (CH) domain. A coiled-coil region spans residues 272-357 (IKALETLVNG…QMETKARQME (86 aa)). The region spanning 472-799 (NIRVYCRVRP…LKFAERVSGV (328 aa)) is the Kinesin motor domain. 556–563 (GQTGSGKT) lines the ATP pocket. Residues 809–844 (EGKDIKELLEQVASLKDTIARKDMEIEQLQLLKSKS) are a coiled coil. Over residues 839 to 881 (LLKSKSPNSMTDRNGSNLLRQSTSSTGLSSLPVASQQNQQLSG) the composition is skewed to polar residues. Residues 839–971 (LLKSKSPNSM…GSLAKPSKRR (133 aa)) are disordered.

It belongs to the TRAFAC class myosin-kinesin ATPase superfamily. Kinesin family. KIN-14 subfamily.

The polypeptide is Kinesin-like protein KIN-14C (Oryza sativa subsp. japonica (Rice)).